The primary structure comprises 462 residues: Probable serine/threonine-protein kinase DDB_G0286841 (462 aa).

The Protein kinase domain maps to Phe-64–Phe-358. Residues Ile-70–Val-78 and Lys-93 contribute to the ATP site. The Proton acceptor role is filled by Asp-188. The AGC-kinase C-terminal domain occupies Ser-359 to Tyr-462. Positions Asn-414 to Asn-439 are enriched in low complexity. The disordered stretch occupies residues Asn-414–Asn-447.

This sequence belongs to the protein kinase superfamily. AGC Ser/Thr protein kinase family.

The enzyme catalyses L-seryl-[protein] + ATP = O-phospho-L-seryl-[protein] + ADP + H(+). The catalysed reaction is L-threonyl-[protein] + ATP = O-phospho-L-threonyl-[protein] + ADP + H(+). This Dictyostelium discoideum (Social amoeba) protein is Probable serine/threonine-protein kinase DDB_G0286841.